The chain runs to 442 residues: tRNA-2-methylthio-N(6)-dimethylallyladenosine synthase (442 aa).

The region spanning 5–122 (KKVFIKTLGC…LPEMIKRKQS (118 aa)) is the MTTase N-terminal domain. The [4Fe-4S] cluster site is built by Cys14, Cys51, Cys85, Cys159, Cys163, and Cys166. In terms of domain architecture, Radical SAM core spans 145–378 (KAEGAKAYVS…DLLNSNAQII (234 aa)). Residues 380-442 (RQMVGTEQRI…LPNSLRGELI (63 aa)) enclose the TRAM domain.

Belongs to the methylthiotransferase family. MiaB subfamily. Monomer. The cofactor is [4Fe-4S] cluster.

Its subcellular location is the cytoplasm. The catalysed reaction is N(6)-dimethylallyladenosine(37) in tRNA + (sulfur carrier)-SH + AH2 + 2 S-adenosyl-L-methionine = 2-methylsulfanyl-N(6)-dimethylallyladenosine(37) in tRNA + (sulfur carrier)-H + 5'-deoxyadenosine + L-methionine + A + S-adenosyl-L-homocysteine + 2 H(+). In terms of biological role, catalyzes the methylthiolation of N6-(dimethylallyl)adenosine (i(6)A), leading to the formation of 2-methylthio-N6-(dimethylallyl)adenosine (ms(2)i(6)A) at position 37 in tRNAs that read codons beginning with uridine. This is tRNA-2-methylthio-N(6)-dimethylallyladenosine synthase from Francisella philomiragia subsp. philomiragia (strain ATCC 25017 / CCUG 19701 / FSC 153 / O#319-036).